The chain runs to 120 residues: UPF0231 protein KPK_4613 (120 aa).

Belongs to the UPF0231 family.

This Klebsiella pneumoniae (strain 342) protein is UPF0231 protein KPK_4613.